Consider the following 468-residue polypeptide: E3 ubiquitin-protein ligase TRIM11 (468 aa).

The segment at 16-57 (CAICLDYFTDPVMTDCGHNFCRECIRRCWGQPEGPYACPECR) adopts an RING-type zinc-finger fold. Ser-85 carries the post-translational modification Phosphoserine. Residues 87–128 (VPQGVCAAHREPLAAFCGDELRLLCAACERSGEHWAHRVRPL) form a B box-type zinc finger. Positions 92, 95, 114, and 120 each coordinate Zn(2+). Residues 128–233 (LQDAAEDLKS…QLAELITELE (106 aa)) adopt a coiled-coil conformation. The region spanning 268–461 (EMRTVCRVPG…MTICRLKGGP (194 aa)) is the B30.2/SPRY domain. Lys-458 participates in a covalent cross-link: Glycyl lysine isopeptide (Lys-Gly) (interchain with G-Cter in ubiquitin).

The protein belongs to the TRIM/RBCC family. Binds cytoplasmic tail of integrin alpha-1. Interacts with the HN peptide. Interacts with PHOX2B. Interacts (when autoubiquitinated) with SQSTM1/p62; promoting AIM2 recruitment to autophagosomes. Interacts with AIM2; promoting its autophagy-dependent degradation. In terms of processing, autoubiquitinated upon DNA stimulation; autoubiquitination promotes interaction with SQSTM1/p62 and recruitment of AIM2 to autophagosomes.

It is found in the cytoplasm. The protein resides in the nucleus. The enzyme catalyses S-ubiquitinyl-[E2 ubiquitin-conjugating enzyme]-L-cysteine + [acceptor protein]-L-lysine = [E2 ubiquitin-conjugating enzyme]-L-cysteine + N(6)-ubiquitinyl-[acceptor protein]-L-lysine.. It functions in the pathway protein modification; protein ubiquitination. In terms of biological role, E3 ubiquitin-protein ligase that promotes the degradation of insoluble ubiquitinated proteins, including insoluble PAX6, poly-Gln repeat expanded HTT and poly-Ala repeat expanded ARX. Mediates PAX6 ubiquitination leading to proteasomal degradation, thereby modulating cortical neurogenesis. May also inhibit PAX6 transcriptional activity, possibly in part by preventing the binding of PAX6 to its consensus sequences. May contribute to the regulation of the intracellular level of HN (humanin) or HN-containing proteins through the proteasomal degradation pathway. Mediates MED15 ubiquitination leading to proteasomal degradation. May contribute to the innate restriction of retroviruses. Upon overexpression, reduces HIV-1 and murine leukemia virus infectivity, by suppressing viral gene expression. Antiviral activity depends on a functional E3 ubiquitin-protein ligase domain. May regulate TRIM5 turnover via the proteasome pathway, thus counteracting the TRIM5-mediated cross-species restriction of retroviral infection at early stages of the retroviral life cycle. Acts as an inhibitor of the AIM2 inflammasome by promoting autophagy-dependent degradation of AIM2. Mechanistically, undergoes autoubiquitination upon DNA stimulation, promoting interaction with AIM2 and SQSTM1/p62, leading to AIM2 recruitment to autophagosomes. The protein is E3 ubiquitin-protein ligase TRIM11 (TRIM11) of Bos taurus (Bovine).